Here is a 237-residue protein sequence, read N- to C-terminus: Probable Bax inhibitor 1 (237 aa).

Over 1–29 the chain is Cytoplasmic; it reads MNVFDRNINFDSLFKFSQISHSTQVHLKN. Residues 30–50 form a helical membrane-spanning segment; that stretch reads VYSSLAVCMFVAAAGSYVHVV. At 51–52 the chain is on the lumenal side; it reads TR. Residues 53-73 form a helical membrane-spanning segment; the sequence is LFQGGMLSVLGSLGMMFWLAM. Topologically, residues 74 to 86 are cytoplasmic; the sequence is TPHNSETEKKRLA. A helical transmembrane segment spans residues 87–107; the sequence is ILAGFAFLTGVGLCPTLDFVI. Topologically, residues 108 to 112 are lumenal; it reads AINPS. A helical membrane pass occupies residues 113-133; sequence IIVTAFLGTSVIFVCFTLSAL. At 134-139 the chain is on the cytoplasmic side; it reads YAKRRS. A helical transmembrane segment spans residues 140–160; sequence YLFLGGTLMSGLSILFLMSMM. Residues 161–166 lie on the Lumenal side of the membrane; it reads NMFFGS. A helical transmembrane segment spans residues 167–187; it reads VMLFKAHMYLGLLIMCGFVLX. Topologically, residues 188–206 are cytoplasmic; it reads DTQLIIEKAENGDKDYVWH. Residues 207–227 constitute an intramembrane region (helical); it reads SVDLFLDFITIFRKLMVILAL. Residues 228-237 lie on the Cytoplasmic side of the membrane; sequence NDKDKKKEKK.

The protein belongs to the BI1 family. Highly abundant in testis.

The protein resides in the endoplasmic reticulum membrane. Suppressor of apoptosis. Modulates unfolded protein response signaling. Modulate ER calcium homeostasis by acting as a calcium-leak channel. This is Probable Bax inhibitor 1 (tmbim6) from Paralichthys olivaceus (Bastard halibut).